We begin with the raw amino-acid sequence, 287 residues long: Succinate dehydrogenase [ubiquinone] iron-sulfur subunit, mitochondrial (287 aa).

Residues 1 to 23 (MISNVLKRASVLARSNGIQSAFY) constitute a mitochondrion transit peptide. Positions 51-140 (FQVYRYNEET…GDTVKVYPLP (90 aa)) constitute a 2Fe-2S ferredoxin-type domain. [2Fe-2S] cluster is bound by residues C101, C106, C109, and C121. A 4Fe-4S ferredoxin-type domain is found at 186–216 (NRHKLDGLYECILCACCSTSCPSYWWSEGGD). Positions 196, 199, and 202 each coordinate [4Fe-4S] cluster. A [3Fe-4S] cluster-binding site is contributed by C206. W211 is a binding site for a ubiquinone. Residues C257 and C263 each contribute to the [3Fe-4S] cluster site. C267 contacts [4Fe-4S] cluster.

Belongs to the succinate dehydrogenase/fumarate reductase iron-sulfur protein family. As to quaternary structure, component of complex II composed of four subunits: the flavoprotein (FP) SDHA, iron-sulfur protein (IP) SDHB, and a cytochrome b composed of a large and a small subunit. It depends on [2Fe-2S] cluster as a cofactor. [3Fe-4S] cluster is required as a cofactor. Requires [4Fe-4S] cluster as cofactor.

The protein resides in the mitochondrion inner membrane. The enzyme catalyses a quinone + succinate = fumarate + a quinol. Its pathway is carbohydrate metabolism; tricarboxylic acid cycle; fumarate from succinate (eukaryal route): step 1/1. Iron-sulfur protein (IP) subunit of succinate dehydrogenase (SDH) that is involved in complex II of the mitochondrial electron transport chain and is responsible for transferring electrons from succinate to ubiquinone (coenzyme Q). The protein is Succinate dehydrogenase [ubiquinone] iron-sulfur subunit, mitochondrial (sdhB) of Dictyostelium discoideum (Social amoeba).